Here is a 230-residue protein sequence, read N- to C-terminus: MSNTRHKIKAVILLSGGLDSTTTLAIAKTKNFECYSLSFDYGQKQKSELKSAENFAKIFGSIKHRVMKISLSNIDFSALTDDKIDIPKFSKSDDIPITYVPARNTIFLSYALSWSEVLDCQHIFIGVNTLDYSGYPDCREIYIKAFEVMANLATKQSIEGKKLTIHTPLIHLNKAQIIKKGLSLGIDYSLTTTCYQADKSGKACGICDACEYRKLGFIEAKVADPTRYQI.

ATP is bound at residue 14-24; sequence LSGGLDSTTTL. Zn(2+) contacts are provided by Cys194, Cys204, Cys207, and Cys210.

Belongs to the QueC family. Requires Zn(2+) as cofactor.

The catalysed reaction is 7-carboxy-7-deazaguanine + NH4(+) + ATP = 7-cyano-7-deazaguanine + ADP + phosphate + H2O + H(+). It functions in the pathway purine metabolism; 7-cyano-7-deazaguanine biosynthesis. Functionally, catalyzes the ATP-dependent conversion of 7-carboxy-7-deazaguanine (CDG) to 7-cyano-7-deazaguanine (preQ(0)). This Ruthia magnifica subsp. Calyptogena magnifica protein is 7-cyano-7-deazaguanine synthase.